Reading from the N-terminus, the 409-residue chain is Glycinol 4-dimethylallyltransferase (409 aa).

The N-terminal 44 residues, 1 to 44 (MDWGLAISSHPKPYSVTTGGNLWRSKHTTKNIYFASSWISKASR), are a transit peptide targeting the chloroplast. 9 consecutive transmembrane segments (helical) span residues 113-133 (LSAFYWFSYPYTMIGITLCAF), 148-168 (LSFLIGVLQGVLPQLFIEIYL), 200-220 (VIISAAFLALSFGFTWITGSW), 222-242 (LICNLVVIASSWTAYSIDVPL), 249-269 (PFVAAMCMISTWALALPISYF), 287-307 (LGFLVAFMTFYSLGLALSKDI), 330-350 (AFWICVSFFEMAFGVGILAGA), 354-374 (HFWTKIFTGMGNAVLASILWY), and 388-408 (GSFYMFIWKLLYAGFFLMALI).

Belongs to the UbiA prenyltransferase family. It depends on Mg(2+) as a cofactor. Mn(2+) serves as cofactor. Requires Co(2+) as cofactor.

Its subcellular location is the plastid. The protein resides in the chloroplast membrane. It carries out the reaction (6aS,11aS)-3,6a,9-trihydroxypterocarpan + dimethylallyl diphosphate = (6aS,11aS)-2-dimethylallyl-3,6a,9-trihydroxypterocarpan + diphosphate. The catalysed reaction is (6aS,11aS)-3,6a,9-trihydroxypterocarpan + dimethylallyl diphosphate = (6aS,11aS)-4-dimethylallyl-3,6a,9-trihydroxypterocarpan + diphosphate. It functions in the pathway phytoalexin biosynthesis; pterocarpan phytoalexin biosynthesis. Its function is as follows. Proposed to be involved in the biosynthesis of pterocarpan phytoalexins, specifically glyceollins. Can act as a prenyltransferase towards glycinol which is the direct precursor of glyceollins. Seems to be specific for prenylation at C-4 thus producing glyceollin I. The chain is Glycinol 4-dimethylallyltransferase (G4DT) from Glycine max (Soybean).